Here is a 451-residue protein sequence, read N- to C-terminus: Cobalamin reductase PduS (451 aa).

2 consecutive 4Fe-4S ferredoxin-type domains span residues 255-284 (TVLSVARTVCEQCRLCTDLCPRHLIGHELS) and 300-330 (PQLLLSALTCSECNVCESVACPVGISPMRIN). [4Fe-4S] cluster-binding residues include cysteine 264, cysteine 267, cysteine 270, cysteine 274, cysteine 309, cysteine 312, cysteine 315, and cysteine 320.

This sequence belongs to the PduS cobalamin reductase family. In terms of assembly, monomeric when purified anaerobically, dimeric under aerobic conditions. Forms a complex with PduO. Interacts with PduT, probably via the N-terminus of PduS. It depends on [4Fe-4S] cluster as a cofactor. Requires FMN as cofactor.

The protein resides in the bacterial microcompartment. Its pathway is polyol metabolism; 1,2-propanediol degradation. Functionally, a protein that aids in conversion of cob(III)alamin to cob(II)alamin and then to cob(I)alamin in the bacterial microcompartment (BMC) dedicated to 1,2-propanediol (1,2-PD) degradation. The latter step requires PduO. No free cob(I)alamin is released, suggesting a complex is formed with PduO that finishes conversion to adenosylcobalamin. PduS and PduO allow regeneration of the adenosylcobalamin cofactor within the BMC. Another study showed reduction of cob(II)alamin to cob(I)alamin in the absence of PduO. Both reactions require NADH. Cyanocobalamin (CN-Cbl) is not a substrate for the first reaction. Cobalamin reduction probably occurs spontaneously in the presence of free reduced flavin nucleotides, this protein may be involved in electron transfer for this reduction. Its function is as follows. The 1,2-PD-specific bacterial microcompartment (BMC) concentrates low levels of 1,2-PD catabolic enzymes, concentrates volatile reaction intermediates thus enhancing pathway flux and keeps the level of toxic, mutagenic propionaldehyde low. This Salmonella typhimurium (strain LT2 / SGSC1412 / ATCC 700720) protein is Cobalamin reductase PduS.